Consider the following 687-residue polypeptide: Chloride channel protein ClC-Kb (687 aa).

Residues 1-50 lie on the Cytoplasmic side of the membrane; it reads MEELVGLREGASKKPVPLQELWGPCPRIRRNIQGGLEWLKERLFRVGEDW. The next 2 helical transmembrane spans lie at 51 to 82 and 91 to 111; these read YFLV…KWLY and LRYL…SGFS. Residues 116–127 constitute an intramembrane region (helical); it reads PSSGGSGIPEVK. Ser121 is a chloride binding site. Transmembrane regions (helical) follow at residues 141–160 and 161–180; these read IKNF…TGST and IFLG…AAYL. Positions 203–224 form an intramembrane region, helical; it reads AGAAVGVATVFAAPISGVLFSI. Residues 236–255 traverse the membrane as a helical segment; sequence YWRGFFAATCGAFMFHLLAV. Residues Glu259, Glu261, Asp278, and Glu281 each contribute to the Ca(2+) site. Helical transmembrane passes span 282 to 310 and 325 to 342; these read IFFF…LFFL and PLYS…TYPP. An intramembrane region (helical) is located at residues 349-360; the sequence is ASRLSMSEHLET. The next 2 helical transmembrane spans lie at 400–420 and 421–440; these read GTLV…TTIP and IPAG…GRLF. A chloride-binding site is contributed by Phe426. An intramembrane region (helical) is located at residues 464-496; that stretch reads GAYALAGAAAFSGAVTHTLSTALLAFEVTGQLV. The helical transmembrane segment at 500–520 threads the bilayer; sequence PVLMAVLAANAISQSFQPSFY. The Cytoplasmic segment spans residues 521 to 687; it reads DGTIIVKKLP…STLTNPPAPK (167 aa). 2 consecutive CBS domains span residues 551-609 and 626-687; these read MNCA…EPAS and CPTQ…PAPK.

This sequence belongs to the chloride channel (TC 2.A.49) family. CLCNKB subfamily. In terms of assembly, homodimer. Interacts with BSND. N-glycosylated. In terms of tissue distribution, specifically expressed in the kidney, predominantly in the outer medulla and cortex. All nephron segments expressing BSND also express CLCNK proteins.

The protein resides in the basolateral cell membrane. It catalyses the reaction chloride(in) = chloride(out). The enzyme catalyses iodide(out) = iodide(in). The catalysed reaction is nitrate(in) = nitrate(out). It carries out the reaction bromide(in) = bromide(out). In terms of biological role, anion-selective channel permeable to small monovalent anions with ion selectivity for chloride &gt; bromide &gt; nitrate &gt; iodide. Forms a homodimeric channel where each subunit has its own ion conduction pathway. May conduct double-barreled currents controlled by two types of gates, two fast gates that control each subunit independently and a slow common gate that opens and shuts off both subunits simultaneously. Assembles with the regulatory subunit BSND/Barttin for sorting at the basolateral plasma membrane domain and functional switch to the ion conducting state. CLCNKB:BSND channels display mostly a linear current-voltage relationship controlled by common gate. Mediates chloride conductance along nephron segments, namely the thick ascending limb of Henle's loop, convoluted tubule and the collecting duct, contributing to the maintenance of systemic acid-base and electrolyte homeostasis. Conducts chloride currents in the stria vascularis of the inner ear to establish the endocochlear potential necessary for normal hearing. This is Chloride channel protein ClC-Kb from Mus musculus (Mouse).